Reading from the N-terminus, the 342-residue chain is Flagellar P-ring protein (342 aa).

Positions 1–19 (MKRVFLWLIFVLAFHKLLA) are cleaved as a signal peptide.

It belongs to the FlgI family. In terms of assembly, the basal body constitutes a major portion of the flagellar organelle and consists of four rings (L,P,S, and M) mounted on a central rod.

Its subcellular location is the periplasm. The protein resides in the bacterial flagellum basal body. Its function is as follows. Assembles around the rod to form the L-ring and probably protects the motor/basal body from shearing forces during rotation. This is Flagellar P-ring protein from Helicobacter pylori (strain P12).